The following is an 807-amino-acid chain: DNA gyrase subunit B (807 aa).

In terms of domain architecture, Toprim spans 429–543; the sequence is SELFIVEGDS…KGYLYIAQPP (115 aa). Residues Glu435, Asp508, and Asp510 each coordinate Mg(2+).

It belongs to the type II topoisomerase GyrB family. Heterotetramer, composed of two GyrA and two GyrB chains. In the heterotetramer, GyrA contains the active site tyrosine that forms a transient covalent intermediate with DNA, while GyrB binds cofactors and catalyzes ATP hydrolysis. The cofactor is Mg(2+). Mn(2+) is required as a cofactor. Ca(2+) serves as cofactor.

The protein resides in the cytoplasm. It carries out the reaction ATP-dependent breakage, passage and rejoining of double-stranded DNA.. Functionally, a type II topoisomerase that negatively supercoils closed circular double-stranded (ds) DNA in an ATP-dependent manner to modulate DNA topology and maintain chromosomes in an underwound state. Negative supercoiling favors strand separation, and DNA replication, transcription, recombination and repair, all of which involve strand separation. Also able to catalyze the interconversion of other topological isomers of dsDNA rings, including catenanes and knotted rings. Type II topoisomerases break and join 2 DNA strands simultaneously in an ATP-dependent manner. The protein is DNA gyrase subunit B of Rickettsia typhi (strain ATCC VR-144 / Wilmington).